Consider the following 167-residue polypeptide: Lipoprotein signal peptidase (167 aa).

3 helical membrane-spanning segments follow: residues 12–32 (WLWLAVLAFVLDQASKLAVVK), 68–88 (WQRWFFAVLAFAICGLLIHWL), and 99–119 (GIAYSLIIGGALGNVFDRLVL). Residues Asp-124 and Asp-142 contribute to the active site. A helical transmembrane segment spans residues 137 to 157 (AFNLADSFIFIGAAMIVLDGF).

The protein belongs to the peptidase A8 family.

The protein resides in the cell inner membrane. The catalysed reaction is Release of signal peptides from bacterial membrane prolipoproteins. Hydrolyzes -Xaa-Yaa-Zaa-|-(S,diacylglyceryl)Cys-, in which Xaa is hydrophobic (preferably Leu), and Yaa (Ala or Ser) and Zaa (Gly or Ala) have small, neutral side chains.. Its pathway is protein modification; lipoprotein biosynthesis (signal peptide cleavage). This protein specifically catalyzes the removal of signal peptides from prolipoproteins. This chain is Lipoprotein signal peptidase, found in Aeromonas hydrophila subsp. hydrophila (strain ATCC 7966 / DSM 30187 / BCRC 13018 / CCUG 14551 / JCM 1027 / KCTC 2358 / NCIMB 9240 / NCTC 8049).